The sequence spans 543 residues: Chaperonin GroEL (543 aa).

Residues 30–33 (TLGP), K51, 87–91 (DGTTT), G415, 480–482 (NAL), and D496 contribute to the ATP site.

The protein belongs to the chaperonin (HSP60) family. Forms a cylinder of 14 subunits composed of two heptameric rings stacked back-to-back. Interacts with the co-chaperonin GroES.

It is found in the cytoplasm. The enzyme catalyses ATP + H2O + a folded polypeptide = ADP + phosphate + an unfolded polypeptide.. Together with its co-chaperonin GroES, plays an essential role in assisting protein folding. The GroEL-GroES system forms a nano-cage that allows encapsulation of the non-native substrate proteins and provides a physical environment optimized to promote and accelerate protein folding. This is Chaperonin GroEL from Gemmatimonas aurantiaca (strain DSM 14586 / JCM 11422 / NBRC 100505 / T-27).